The sequence spans 96 residues: SPbeta prophage-derived uncharacterized protein YosV (96 aa).

This Bacillus subtilis (strain 168) protein is SPbeta prophage-derived uncharacterized protein YosV (yosV).